We begin with the raw amino-acid sequence, 428 residues long: Dihydroorotase (428 aa).

2 residues coordinate Zn(2+): His61 and His63. Residues 63-65 (HLR) and Asn95 contribute to the substrate site. Residues Asp153, His180, and His233 each coordinate Zn(2+). Residue Asn279 participates in substrate binding. Asp306 contributes to the Zn(2+) binding site. Residue Asp306 is part of the active site. Substrate is bound by residues His310 and 324–325 (FG).

Belongs to the metallo-dependent hydrolases superfamily. DHOase family. Class I DHOase subfamily. It depends on Zn(2+) as a cofactor.

It carries out the reaction (S)-dihydroorotate + H2O = N-carbamoyl-L-aspartate + H(+). It functions in the pathway pyrimidine metabolism; UMP biosynthesis via de novo pathway; (S)-dihydroorotate from bicarbonate: step 3/3. In terms of biological role, catalyzes the reversible cyclization of carbamoyl aspartate to dihydroorotate. The chain is Dihydroorotase from Geobacillus kaustophilus (strain HTA426).